We begin with the raw amino-acid sequence, 88 residues long: Large ribosomal subunit protein bL31B (88 aa).

It belongs to the bacterial ribosomal protein bL31 family. Type B subfamily. Part of the 50S ribosomal subunit.

The protein is Large ribosomal subunit protein bL31B of Leuconostoc citreum (strain KM20).